The chain runs to 146 residues: Large-conductance mechanosensitive channel (146 aa).

3 helical membrane-spanning segments follow: residues 17–37 (IDLA…DSLV), 40–60 (IIMP…QKFV), and 89–109 (LTIL…VKLI).

The protein belongs to the MscL family. In terms of assembly, homopentamer.

The protein resides in the cell inner membrane. Its function is as follows. Channel that opens in response to stretch forces in the membrane lipid bilayer. May participate in the regulation of osmotic pressure changes within the cell. The polypeptide is Large-conductance mechanosensitive channel (Acinetobacter baylyi (strain ATCC 33305 / BD413 / ADP1)).